Here is a 329-residue protein sequence, read N- to C-terminus: Apolipoprotein E (329 aa).

The first 18 residues, 1-18 (MKVLWAALVVALLAGCWA), serve as a signal peptide directing secretion. 8 repeat units span residues 92-113 (TLME…EQLG), 114-135 (PMAS…ARLR), 136-157 (SDME…AMLG), 158-179 (QSTE…KRVL), 180-201 (RDAE…EGAE), 202-223 (RSVS…TRHA), 224-245 (KVDA…QQLR), and 246-267 (GRLE…EQME). The tract at residues 92–267 (TLMEETMKEI…HLDEVREQME (176 aa)) is 8 X 22 AA approximate tandem repeats. Met-155 is subject to Methionine sulfoxide. At Ser-159 the chain carries Phosphoserine. The tract at residues 170-180 (HMRKLRKRVLR) is LDL and other lipoprotein receptors binding. A heparin-binding site is contributed by 174–177 (LRKR). The interval 222 to 302 (HAKVDALATQ…GWFEPLVEDM (81 aa)) is lipid-binding and lipoprotein association. Residue 241 to 248 (GQQLRGRL) participates in heparin binding. Residues 278-329 (NQMRQQAEPFQARLKGWFEPLVEDMQRQWAVLVEKVQAAVGTSPTTPPVETK) are homooligomerization. The tract at residues 290-302 (RLKGWFEPLVEDM) is specificity for association with VLDL.

This sequence belongs to the apolipoprotein A1/A4/E family. In terms of assembly, homotetramer. May interact with ABCA1; functionally associated with ABCA1 in the biogenesis of HDLs. May interact with APP/A4 amyloid-beta peptide; the interaction is extremely stable in vitro but its physiological significance is unclear. May interact with MAPT. May interact with MAP2. In the cerebrospinal fluid, interacts with secreted SORL1. Interacts with PMEL; this allows the loading of PMEL luminal fragment on ILVs to induce fibril nucleation. In terms of processing, APOE exists as multiple glycosylated and sialylated glycoforms within cells and in plasma. The extent of glycosylation and sialylation are tissue and context specific. Glycated in plasma VLDL. Post-translationally, phosphorylated by FAM20C in the extracellular medium.

It is found in the secreted. The protein resides in the extracellular space. It localises to the extracellular matrix. The protein localises to the extracellular vesicle. Its subcellular location is the endosome. It is found in the multivesicular body. Its function is as follows. APOE is an apolipoprotein, a protein associating with lipid particles, that mainly functions in lipoprotein-mediated lipid transport between organs via the plasma and interstitial fluids. APOE is a core component of plasma lipoproteins and is involved in their production, conversion and clearance. Apolipoproteins are amphipathic molecules that interact both with lipids of the lipoprotein particle core and the aqueous environment of the plasma. As such, APOE associates with chylomicrons, chylomicron remnants, very low density lipoproteins (VLDL) and intermediate density lipoproteins (IDL) but shows a preferential binding to high-density lipoproteins (HDL). It also binds a wide range of cellular receptors including the LDL receptor/LDLR, the LDL receptor-related proteins LRP1, LRP2 and LRP8 and the very low-density lipoprotein receptor/VLDLR that mediate the cellular uptake of the APOE-containing lipoprotein particles. Finally, APOE also has a heparin-binding activity and binds heparan-sulfate proteoglycans on the surface of cells, a property that supports the capture and the receptor-mediated uptake of APOE-containing lipoproteins by cells. A main function of APOE is to mediate lipoprotein clearance through the uptake of chylomicrons, VLDLs, and HDLs by hepatocytes. APOE is also involved in the biosynthesis by the liver of VLDLs as well as their uptake by peripheral tissues ensuring the delivery of triglycerides and energy storage in muscle, heart and adipose tissues. By participating in the lipoprotein-mediated distribution of lipids among tissues, APOE plays a critical role in plasma and tissues lipid homeostasis. APOE is also involved in two steps of reverse cholesterol transport, the HDLs-mediated transport of cholesterol from peripheral tissues to the liver, and thereby plays an important role in cholesterol homeostasis. First, it is functionally associated with ABCA1 in the biogenesis of HDLs in tissues. Second, it is enriched in circulating HDLs and mediates their uptake by hepatocytes. APOE also plays an important role in lipid transport in the central nervous system, regulating neuron survival and sprouting. The sequence is that of Apolipoprotein E (APOE) from Arctocephalus gazella (Antarctic fur seal).